The primary structure comprises 516 residues: Glucose-6-phosphate 1-dehydrogenase 5, cytoplasmic (516 aa).

Residues 38 to 45, Arg73, Tyr156, and Lys183 each bind NADP(+); that span reads GASGDLAK. D-glucose 6-phosphate is bound by residues Lys183, 213–217, Glu251, and Asp270; that span reads HYLGK. The active-site Proton acceptor is the His275. An NADP(+)-binding site is contributed by Lys358. D-glucose 6-phosphate-binding residues include Lys361 and Lys366. Residues Lys367, Arg371, and Arg395 each contribute to the NADP(+) site. Position 397 (Gln397) interacts with D-glucose 6-phosphate. Residues 403–405, 423–425, Arg489, and Trp511 contribute to the NADP(+) site; these read YMK and DLS.

This sequence belongs to the glucose-6-phosphate dehydrogenase family. In terms of assembly, forms homodimer. Expressed in leaves and stems.

It is found in the cytoplasm. The protein localises to the cytosol. The catalysed reaction is D-glucose 6-phosphate + NADP(+) = 6-phospho-D-glucono-1,5-lactone + NADPH + H(+). The protein operates within carbohydrate degradation; pentose phosphate pathway; D-ribulose 5-phosphate from D-glucose 6-phosphate (oxidative stage): step 1/3. Regulated by metabolites. In terms of biological role, catalyzes the rate-limiting step of the oxidative pentose-phosphate pathway, which represents a route for the dissimilation of carbohydrates besides glycolysis. The main function of this enzyme is to provide reducing power (NADPH) and pentose phosphates for fatty acid and nucleic acid synthesis which are involved in membrane synthesis and cell division. The chain is Glucose-6-phosphate 1-dehydrogenase 5, cytoplasmic from Arabidopsis thaliana (Mouse-ear cress).